The chain runs to 522 residues: Lysine--tRNA ligase (522 aa).

Residues 44 to 52 (PSGLPHIGT) carry the 'HIGH' region motif. Positions 290-294 (KISKS) match the 'KMSKS' region motif. Lysine 293 is a binding site for ATP.

It belongs to the class-I aminoacyl-tRNA synthetase family.

The protein localises to the cytoplasm. It catalyses the reaction tRNA(Lys) + L-lysine + ATP = L-lysyl-tRNA(Lys) + AMP + diphosphate. This chain is Lysine--tRNA ligase, found in Rickettsia africae (strain ESF-5).